We begin with the raw amino-acid sequence, 362 residues long: CLIP domain-containing serine protease B10 (362 aa).

The signal sequence occupies residues 1–19; sequence MAKVVDCVLLLAFIAVVRG. A Clip domain is found at 22 to 75; that stretch reads ACRTPDHRDGVCHPVQQCPSVRDEFFNSDRVLSEDEIDYLRKLQCKTKDVTICC. 3 disulfide bridges follow: cysteine 23-cysteine 74, cysteine 33-cysteine 66, and cysteine 39-cysteine 75. Positions 110–361 constitute a Peptidase S1 domain; sequence IIGGNYTAID…YLDWIRQNIR (252 aa). N-linked (GlcNAc...) asparagine glycosylation is present at asparagine 114. The cysteines at positions 140 and 156 are disulfide-linked. Catalysis depends on charge relay system residues histidine 155 and aspartate 220. N-linked (GlcNAc...) asparagine glycosylation is present at asparagine 254. 2 cysteine pairs are disulfide-bonded: cysteine 285-cysteine 300 and cysteine 310-cysteine 337. Serine 314 (charge relay system) is an active-site residue.

It belongs to the peptidase S1 family. CLIP subfamily. Forms a covalent heterodimer with SRPN2; the interaction inhibits CLIPB10 catalytic activity. In terms of processing, cleaved by an unknown protease into an active form.

It is found in the secreted. Inhibited by serpin SRPN2. Functionally, serine protease which preferentially cleaves after arginine residues. Involved in the innate immune response against parasite P.bergei infection by activating the melanization cascade. Probably in the hemolymph, cleaves and activates prophenoloxidase (PPO), which functions in the formation of pigments such as melanin and other polyphenolic compounds. In the susceptible strain G3, appears to be dispensable for ookinete elimination which occurs by lysis. The polypeptide is CLIP domain-containing serine protease B10 (Anopheles gambiae (African malaria mosquito)).